We begin with the raw amino-acid sequence, 84 residues long: Large ribosomal subunit protein bL27 (84 aa).

Residues 1–21 form a disordered region; it reads MAHKKGVGSSRNGRDSDGQRL.

The protein belongs to the bacterial ribosomal protein bL27 family.

This Trichlorobacter lovleyi (strain ATCC BAA-1151 / DSM 17278 / SZ) (Geobacter lovleyi) protein is Large ribosomal subunit protein bL27.